A 524-amino-acid polypeptide reads, in one-letter code: MSAAPLDYKKALEHLKTYSSKDGLSVQELMDSTTRGGLTYNDFLVLPGLVNFPSSAVSLQTKLTKKITLNTPFVSSPMDTVTEADMAIYMALLGGIGFIHHNCTPKEQASMVKKVKMFENGFINSPIVISPTTTVGEVKVMKRKFGFSGFPVTEDGKCPGKLVGLVTSRDIQFLEDDSLVVSEVMTKNPVTGIKGITLKEGNEILKQTKKGKLLIVDDNGNLVSMLSRADLMKNQNYPLASKSATTKQLLCGAAIGTIEADKERLRLLVEAGLDVVILDSSQGNSVFQLNMIKWIKETFPDLEIIAGNVATREQAANLIAAGADGLRIGMGSGSICITQEVMACGRPQGTAVYNVCQFANQFGVPCMADGGVQNIGHITKALALGSSTVMMGGMLAGTTESPGEYFYKDGKRLKAYRGMGSIDAMQKTGNKGNASTSRYFSESDSVLVAQGVSGAVVDKGSIKKFIPYLYNGLQHSCQDIGCESLTSLKENVQNGEVRFEFRTASAQLEGGVHNLHSYEKRLYN.

CBS domains are found at residues 122-183 (FINS…VVSE) and 185-241 (MTKN…PLAS). The residue at position 125 (Ser125) is a Phosphoserine. Residues 279-281 (DSS) and 329-331 (GMG) each bind NAD(+). Gly331 and Gly333 together coordinate K(+). Ser334 contributes to the IMP binding site. Cys336 lines the K(+) pocket. Catalysis depends on Cys336, which acts as the Thioimidate intermediate. Residues 369–371 (DGG), 392–393 (GG), and 416–420 (YRGMG) contribute to the IMP site. Arg438 acts as the Proton acceptor in catalysis. Gln450 serves as a coordination point for IMP. Residues Glu509, Gly510, and Gly511 each contribute to the K(+) site.

The protein belongs to the IMPDH/GMPR family. Homotetramer. Seems to be able to form heterotetramers composed from more than 1 of the 3 IMPDH gene products (IMD2-4). K(+) serves as cofactor.

The protein resides in the cytoplasm. It catalyses the reaction IMP + NAD(+) + H2O = XMP + NADH + H(+). It participates in purine metabolism; XMP biosynthesis via de novo pathway; XMP from IMP: step 1/1. Its activity is regulated as follows. Mycophenolic acid (MPA) is a non-competitive inhibitor that prevents formation of the closed enzyme conformation by binding to the same site as the amobile flap. In contrast, mizoribine monophosphate (MZP) is a competitive inhibitor that induces the closed conformation. MPA is a potent inhibitor of mammalian IMPDHs but a poor inhibitor of the bacterial enzymes. MZP is a more potent inhibitor of bacterial IMPDH. Functionally, catalyzes the conversion of inosine 5'-phosphate (IMP) to xanthosine 5'-phosphate (XMP), the first committed and rate-limiting step in the de novo synthesis of guanine nucleotides, and therefore plays an important role in the regulation of cell growth. This is Inosine-5'-monophosphate dehydrogenase 4 from Saccharomyces cerevisiae (strain ATCC 204508 / S288c) (Baker's yeast).